The primary structure comprises 365 residues: Validamycin A dioxygenase (365 aa).

In terms of domain architecture, Fe2OG dioxygenase spans histidine 174–alanine 284. Positions 203, 205, and 261 each coordinate Fe cation. The interval glycine 331–glutamine 365 is disordered. Over residues serine 336–proline 348 the composition is skewed to low complexity.

The protein belongs to the iron/ascorbate-dependent oxidoreductase family. Requires Fe(2+) as cofactor.

The catalysed reaction is validamycin A + 2-oxoglutarate + O2 = validamycin B + succinate + CO2 + H(+). The enzyme catalyses validoxylamine A + 2-oxoglutarate + O2 = validoxylamine B + succinate + CO2 + H(+). The protein operates within antibiotic biosynthesis. Functionally, involved in the biosynthesis of validamycin B, a component of the antifungal and antibiotic validamycin complex used as a crop protectant. Catalyzes the regioselective hydroxylation of validamycin A (4-O-beta-D-glucopyranosyl-validoxylamine A) at the C-6 position to yield validamycin B. To a lesser extent, also able to convert validoxylamine A to its hydroxylated derivative. The polypeptide is Validamycin A dioxygenase (Streptomyces hygroscopicus subsp. limoneus).